The primary structure comprises 370 residues: 4-hydroxy-3-methylbut-2-en-1-yl diphosphate synthase (flavodoxin) (370 aa).

[4Fe-4S] cluster is bound by residues Cys-270, Cys-273, Cys-305, and Glu-312.

It belongs to the IspG family. Requires [4Fe-4S] cluster as cofactor.

The enzyme catalyses (2E)-4-hydroxy-3-methylbut-2-enyl diphosphate + oxidized [flavodoxin] + H2O + 2 H(+) = 2-C-methyl-D-erythritol 2,4-cyclic diphosphate + reduced [flavodoxin]. Its pathway is isoprenoid biosynthesis; isopentenyl diphosphate biosynthesis via DXP pathway; isopentenyl diphosphate from 1-deoxy-D-xylulose 5-phosphate: step 5/6. Its function is as follows. Converts 2C-methyl-D-erythritol 2,4-cyclodiphosphate (ME-2,4cPP) into 1-hydroxy-2-methyl-2-(E)-butenyl 4-diphosphate. The protein is 4-hydroxy-3-methylbut-2-en-1-yl diphosphate synthase (flavodoxin) of Hahella chejuensis (strain KCTC 2396).